The sequence spans 978 residues: Sensor histidine kinase TodS (978 aa).

Positions 32-103 constitute a PAS 1 domain; it reads CEEHARIIFD…TQKRLVETAS (72 aa). Residues 108–162 enclose the PAC 1 domain; sequence VRCDVEILGKSGGREVIAVDFSLLPICNEEGSIVYLLAEGRNITDKKKAEAMLAL. Positions 187–405 constitute a Histidine kinase 1 domain; that stretch reads KVSHELRTPL…LFQVKLPLNA (219 aa). His-190 carries the post-translational modification Phosphohistidine; by autocatalysis. A Response regulatory domain is found at 452–567; the sequence is RVLIVEDNPD…ELRARVSNLV (116 aa). A 4-aspartylphosphate modification is found at Asp-500. The PAS 2 domain maps to 611 to 681; the sequence is SEARWKAVYE…QRLANLLQGG (71 aa). A PAC 2 domain is found at 685-737; that stretch reads YSVERSYLCKNGSTIWANASVSLMPQRVGESPVILQIIDDITEKKQAQENLNQ. The Histidine kinase 2 domain occupies 757 to 974; sequence YIAHEINQPL…CFLVSIPARQ (218 aa). His-760 is subject to Phosphohistidine.

In terms of processing, autophosphorylated. Activation requires a sequential transfer of a phosphate group from a His in the primary transmitter domain, to an Asp in the receiver domain and to a His in the secondary transmitter domain.

The protein resides in the cytoplasm. It catalyses the reaction ATP + protein L-histidine = ADP + protein N-phospho-L-histidine.. Its activity is regulated as follows. Activity is regulated by agonists and antagonists. Binding of agonists such as toluene or benzene to TodS stimulates autophosphorylation at His-190. Activity is inhibited by antagonists such as o-xylene, o-chlorotoluene and trimethylbenzene isomers, which bind to TodS but do not stimulate autophosphorylation. Agonists and antagonists bind to the same PAS domain. Functionally, member of the two-component regulatory system TodS/TodT involved in the regulation of toluene degradation. Phosphorylates TodT via a four-step phosphorelay in response to toluene. Can also be induced by benzene and ethylbenzene. The polypeptide is Sensor histidine kinase TodS (todS) (Pseudomonas putida (strain DOT-T1E)).